A 651-amino-acid polypeptide reads, in one-letter code: MANLLENFAAHHSMTAGAKKKADHQDTSVSQDSGYSDSLKGFSPDSHKSGNFLETVTEGYENSENIDPTLILSPIKYELSWGADTRESKQLAPLYETPRVGKKEFSLRRRLLISKATSGGNLDFDVSVCSAESCGREKSLRRIPSHEGSLSNSFADSPRDGSYEPIATSTLKTESESGTSCKKWRLSFAQQRSSTLDDSKSDSIPLPEVENISPVQHSLASSTDDSILYEETIFGAPTTPTCNFIVKEEFQTPISNLAANFRFNLCTPDVGHVSDFDISVTEDSAFHSLSLDKSQDSITDHEGSFQELIQKPRETSKAVNNKSRLRKLDRCRRLSTLRERGSQSEVEEEGNEVPVLSSAYKLKVARASVDEENEFSSDESRVHSLLSSDDLTGKPALRVLHEMLLRSTRKRPQQATVQDLLGSSGCFELPEDSLSRLIGRKMGLETFDILAELKNRNLKHILASILDLVNAASICSMCRVSRDWRDVVLQDKSAHQRRKAYIKKLKTEAEQGRQLSFEDSATRLNILSRSALRSVQIQARSAFRTPTSSLTPGDNKSIHSASKHQEYLKVAKTLFTDEALKPCPRCQYPAKYQALKKRGTCSRKDCGFDFCSLCLCTFHGSKECGTGSAKRIPKKEALPGSAQSKRNLKRL.

Disordered regions lie at residues 14 to 42 and 140 to 171; these read MTAG…LKGF and LRRI…TSTL. A compositionally biased stretch (polar residues) spans 27-36; sequence TSVSQDSGYS. Position 33 is a phosphoserine; by PLK1 (serine 33). Threonine 195 bears the Phosphothreonine; by CaMK2 mark. An F-box domain is found at 424-499; that stretch reads SGCFELPEDS…QDKSAHQRRK (76 aa). A ZBR-type zinc finger spans residues 579-627; it reads ALKPCPRCQYPAKYQALKKRGTCSRKDCGFDFCSLCLCTFHGSKECGTG. Zn(2+)-binding residues include cysteine 583, cysteine 586, cysteine 601, cysteine 606, cysteine 611, cysteine 614, histidine 619, and cysteine 624.

Part of a SCF (SKP1-cullin-F-box) protein ligase complex. Interaction with SKP1 does not occur. Post-translationally, phosphorylated on Thr-195 by CaMK2 in response to calcium during egg activation, which promotes subsequent phosphorylation by PLK1, ubiquitination and protesomal degradation. Ubiquitinated by FBXW1 during egg activation, which promotes proteasomal degradation.

It functions in the pathway protein modification; protein ubiquitination. In terms of biological role, required to prevent anaphase onset in cytostatic factor-arrested oocytes. Inhibits the anaphase-promoting complex/cyclosome (APC/C) ubiquitin ligase and prevents cyclin degradation. Probably recognizes and binds to some phosphorylated proteins and promotes their ubiquitination and degradation. The polypeptide is F-box only protein 43 (fbxo43) (Xenopus laevis (African clawed frog)).